The sequence spans 246 residues: Probable transcriptional regulatory protein HD_0596 (246 aa).

Belongs to the TACO1 family.

The protein localises to the cytoplasm. In Haemophilus ducreyi (strain 35000HP / ATCC 700724), this protein is Probable transcriptional regulatory protein HD_0596.